Here is a 1502-residue protein sequence, read N- to C-terminus: Clustered mitochondria protein homolog (1502 aa).

Disordered regions lie at residues 1–62, 571–615, 755–799, 1054–1085, 1381–1403, and 1429–1502; these read MSES…EPLD, AQAE…NPMM, AEAE…EEDR, KDQE…GETV, ARER…RLGG, and GQGG…GAKR. Positions 7 to 35 are enriched in low complexity; the sequence is AAAQNGQAEEQQLQQQLDEQQQLEEQQQL. The segment covering 53-62 has biased composition (basic and acidic residues); that stretch reads KPKDSTEPLD. One can recognise a Clu domain in the interval 399-693; sequence EILRTQLAFL…RLAPVDVEWL (295 aa). A compositionally biased stretch (acidic residues) spans 575-586; sequence TEAEAETADAVE. The segment covering 587–606 has biased composition (basic and acidic residues); the sequence is GEQKKEDWVDVEKPTEKSGS. Low complexity predominate over residues 781–792; sequence EEQSAAASAAAA. A compositionally biased stretch (basic and acidic residues) spans 1054–1069; that stretch reads KDQEEEENKREENIKS. Positions 1429–1451 are enriched in low complexity; the sequence is GQGGNPSANAAAATAGQGEQANG. Positions 1462-1471 are enriched in basic and acidic residues; that stretch reads RGTESLEELV. Residues 1486-1502 are compositionally biased toward basic residues; the sequence is KRGKNALRGKRRTGAKR.

It belongs to the CLU family. May associate with the eukaryotic translation initiation factor 3 (eIF-3) complex.

It localises to the cytoplasm. In terms of biological role, mRNA-binding protein involved in proper cytoplasmic distribution of mitochondria. The sequence is that of Clustered mitochondria protein homolog from Cryptococcus neoformans var. neoformans serotype D (strain B-3501A) (Filobasidiella neoformans).